Reading from the N-terminus, the 456-residue chain is ATP-dependent protease ATPase subunit HslU (456 aa).

Residues Ile18, 60–65 (GVGKTE), Asp270, Glu334, and Arg406 contribute to the ATP site.

This sequence belongs to the ClpX chaperone family. HslU subfamily. As to quaternary structure, a double ring-shaped homohexamer of HslV is capped on each side by a ring-shaped HslU homohexamer. The assembly of the HslU/HslV complex is dependent on binding of ATP.

The protein localises to the cytoplasm. Functionally, ATPase subunit of a proteasome-like degradation complex; this subunit has chaperone activity. The binding of ATP and its subsequent hydrolysis by HslU are essential for unfolding of protein substrates subsequently hydrolyzed by HslV. HslU recognizes the N-terminal part of its protein substrates and unfolds these before they are guided to HslV for hydrolysis. In Exiguobacterium sibiricum (strain DSM 17290 / CCUG 55495 / CIP 109462 / JCM 13490 / 255-15), this protein is ATP-dependent protease ATPase subunit HslU.